A 116-amino-acid polypeptide reads, in one-letter code: Ribosome-binding factor A (116 aa).

The protein belongs to the RbfA family. As to quaternary structure, monomer. Binds 30S ribosomal subunits, but not 50S ribosomal subunits or 70S ribosomes.

The protein localises to the cytoplasm. Functionally, one of several proteins that assist in the late maturation steps of the functional core of the 30S ribosomal subunit. Associates with free 30S ribosomal subunits (but not with 30S subunits that are part of 70S ribosomes or polysomes). Required for efficient processing of 16S rRNA. May interact with the 5'-terminal helix region of 16S rRNA. The sequence is that of Ribosome-binding factor A from Clostridium perfringens (strain 13 / Type A).